Here is a 203-residue protein sequence, read N- to C-terminus: MLTEQQRRELDWEKTDGLMPVIVQHAVSGEVLMLGYMNPEALDKTLESGKVTFFSRTKQRLWTKGETSGNFLNVVSIAPDCDNDTLLVLANPIGPTCHKGTSSCFGDTAHQWLFLYQLEQLLAERKSADPETSYTAKLYASGTKRIAQKVGEEGVETALAATVHDRFELTNEASDLMYHLLVLLQDQGLDLTTVIENLRKRHQ.

Residues 1–114 (MLTEQQRREL…FGDTAHQWLF (114 aa)) are phosphoribosyl-AMP cyclohydrolase. The phosphoribosyl-ATP pyrophosphohydrolase stretch occupies residues 115–203 (LYQLEQLLAE…VIENLRKRHQ (89 aa)).

The protein in the N-terminal section; belongs to the PRA-CH family. In the C-terminal section; belongs to the PRA-PH family.

It localises to the cytoplasm. It carries out the reaction 1-(5-phospho-beta-D-ribosyl)-ATP + H2O = 1-(5-phospho-beta-D-ribosyl)-5'-AMP + diphosphate + H(+). The catalysed reaction is 1-(5-phospho-beta-D-ribosyl)-5'-AMP + H2O = 1-(5-phospho-beta-D-ribosyl)-5-[(5-phospho-beta-D-ribosylamino)methylideneamino]imidazole-4-carboxamide. It functions in the pathway amino-acid biosynthesis; L-histidine biosynthesis; L-histidine from 5-phospho-alpha-D-ribose 1-diphosphate: step 2/9. The protein operates within amino-acid biosynthesis; L-histidine biosynthesis; L-histidine from 5-phospho-alpha-D-ribose 1-diphosphate: step 3/9. In Escherichia coli (strain K12), this protein is Histidine biosynthesis bifunctional protein HisIE (hisI).